A 307-amino-acid polypeptide reads, in one-letter code: Acetaldehyde dehydrogenase (307 aa).

12 to 15 (SGNI) contributes to the NAD(+) binding site. Residue Cys-127 is the Acyl-thioester intermediate of the active site. Residues 158–166 (SAGPGTRQN) and Asn-278 each bind NAD(+).

This sequence belongs to the acetaldehyde dehydrogenase family. Monomer. Can also form a heterotetramer composed of two aldolase (TTHB246) and two dehydrogenase (TTHB247) subunits. Upon complex formation, the aldolase shows a 5-fold increase in substrate affinity, while the dehydrogenase shows a 3-fold decrease; the kcat values of each enzyme are reduced by 2-fold when they are in a complex.

The catalysed reaction is acetaldehyde + NAD(+) + CoA = acetyl-CoA + NADH + H(+). It carries out the reaction propanal + NAD(+) + CoA = propanoyl-CoA + NADH + H(+). Its function is as follows. Catalyzes the conversion of acetaldehyde or propanal to acetyl-CoA or propanoyl-CoA, respectively, using NAD(+) and coenzyme A. The aldehyde substrates can be directly channeled from the aldolase TTHB246 to the dehydrogenase TTHB247. Is the final enzyme in the meta-cleavage pathway for the degradation of aromatic compounds. The chain is Acetaldehyde dehydrogenase from Thermus thermophilus (strain ATCC 27634 / DSM 579 / HB8).